Reading from the N-terminus, the 288-residue chain is Structure-specific endonuclease subunit SLX1 (288 aa).

Positions 10-93 (DFYCSYLLRS…QHSYKTRFIE (84 aa)) constitute a GIY-YIG domain. The SLX1-type zinc finger occupies 209-265 (CMICDKKIDYIHDEGTQMVGFCSDDECDFLSCLSCLYKEFTKNSKQIIPKSGHCPNC).

This sequence belongs to the SLX1 family. Forms a heterodimer with SLX4. A divalent metal cation is required as a cofactor.

It localises to the nucleus. Functionally, catalytic subunit of the SLX1-SLX4 structure-specific endonuclease that resolves DNA secondary structures generated during DNA repair and recombination. Has endonuclease activity towards branched DNA substrates, introducing single-strand cuts in duplex DNA close to junctions with ss-DNA. The polypeptide is Structure-specific endonuclease subunit SLX1 (Kluyveromyces lactis (strain ATCC 8585 / CBS 2359 / DSM 70799 / NBRC 1267 / NRRL Y-1140 / WM37) (Yeast)).